The chain runs to 117 residues: Large ribosomal subunit protein bL19 (117 aa).

This sequence belongs to the bacterial ribosomal protein bL19 family.

This protein is located at the 30S-50S ribosomal subunit interface and may play a role in the structure and function of the aminoacyl-tRNA binding site. The protein is Large ribosomal subunit protein bL19 of Azobacteroides pseudotrichonymphae genomovar. CFP2.